A 533-amino-acid polypeptide reads, in one-letter code: Thromboxane-A synthase (533 aa).

Residues 1–10 are Cytoplasmic-facing; sequence MEVLGLLKFE. The helical transmembrane segment at 11–31 threads the bilayer; the sequence is VSGTIVTVTLLVALLALLKWY. Residues 32–75 lie on the Lumenal side of the membrane; that stretch reads SMSAFSRLEKLGIRHPKPSPFVGNLMFFRQGFWESQLELRERYG. The chain crosses the membrane as a helical span at residues 76 to 96; that stretch reads PLCGYYLGRRMHVVISEPDMI. The Cytoplasmic segment spans residues 97-223; it reads KQVLVENFSN…RRASTFCIPR (127 aa). The helical transmembrane segment at 224-244 threads the bilayer; that stretch reads PLLVLILSFPSIMVPLARILP. Residues 245 to 335 are Lumenal-facing; sequence NKNRDELNGF…FTVDEIVGQA (91 aa). The chain crosses the membrane as a helical span at residues 336 to 356; the sequence is FLFLIAGHEVITNTLSFITYL. Over 357–533 the chain is Cytoplasmic; it reads LATHPDCQER…NGVYIKIVSR (177 aa). Cys-479 contacts heme.

This sequence belongs to the cytochrome P450 family. In terms of assembly, monomer. The cofactor is heme. In terms of tissue distribution, expressed primarily in lung, kidney, and spleen.

The protein localises to the endoplasmic reticulum membrane. The enzyme catalyses prostaglandin H2 = thromboxane A2. It catalyses the reaction prostaglandin H2 = (12S)-hydroxy-(5Z,8E,10E)-heptadecatrienoate + malonaldehyde. It carries out the reaction a hydroperoxyeicosatetraenoate = an oxoeicosatetraenoate + H2O. The catalysed reaction is (15S)-hydroperoxy-(5Z,8Z,11Z,13E)-eicosatetraenoate = 15-oxo-(5Z,8Z,11Z,13E)-eicosatetraenoate + H2O. The enzyme catalyses (15S)-hydroperoxy-(5Z,8Z,11Z,13E)-eicosatetraenoate + AH2 = (15S)-hydroxy-(5Z,8Z,11Z,13E)-eicosatetraenoate + A + H2O. Functionally, catalyzes the conversion of prostaglandin H2 (PGH2) to thromboxane A2 (TXA2), a potent inducer of blood vessel constriction and platelet aggregation. Also cleaves PGH2 to 12-hydroxy-heptadecatrienoicacid (12-HHT) and malondialdehyde, which is known to act as a mediator of DNA damage. 12-HHT and malondialdehyde are formed stoichiometrically in the same amounts as TXA2. Additionally, displays dehydratase activity, toward (15S)-hydroperoxy-(5Z,8Z,11Z,13E)-eicosatetraenoate (15(S)-HPETE) producing 15-KETE and 15-HETE. This Mus musculus (Mouse) protein is Thromboxane-A synthase (Tbxas1).